We begin with the raw amino-acid sequence, 433 residues long: Histidine--tRNA ligase (433 aa).

The protein belongs to the class-II aminoacyl-tRNA synthetase family. As to quaternary structure, homodimer.

It localises to the cytoplasm. The catalysed reaction is tRNA(His) + L-histidine + ATP = L-histidyl-tRNA(His) + AMP + diphosphate + H(+). In Pseudothermotoga lettingae (strain ATCC BAA-301 / DSM 14385 / NBRC 107922 / TMO) (Thermotoga lettingae), this protein is Histidine--tRNA ligase.